The sequence spans 476 residues: Probable cytosol aminopeptidase (476 aa).

Lys242 and Asp247 together coordinate Mn(2+). Lys254 is an active-site residue. Mn(2+)-binding residues include Asp265, Asp324, and Glu326. The active site involves Arg328.

It belongs to the peptidase M17 family. Mn(2+) serves as cofactor.

It localises to the cytoplasm. It carries out the reaction Release of an N-terminal amino acid, Xaa-|-Yaa-, in which Xaa is preferably Leu, but may be other amino acids including Pro although not Arg or Lys, and Yaa may be Pro. Amino acid amides and methyl esters are also readily hydrolyzed, but rates on arylamides are exceedingly low.. It catalyses the reaction Release of an N-terminal amino acid, preferentially leucine, but not glutamic or aspartic acids.. Functionally, presumably involved in the processing and regular turnover of intracellular proteins. Catalyzes the removal of unsubstituted N-terminal amino acids from various peptides. In Treponema denticola (strain ATCC 35405 / DSM 14222 / CIP 103919 / JCM 8153 / KCTC 15104), this protein is Probable cytosol aminopeptidase.